A 254-amino-acid chain; its full sequence is N(G),N(G)-dimethylarginine dimethylaminohydrolase (254 aa).

Substrate contacts are provided by residues leucine 18, aspartate 60, 65–66 (ED), arginine 85, and arginine 132. Histidine 162 acts as the Proton donor in catalysis. Histidine 162 is a binding site for Zn(2+). Isoleucine 243 is a substrate binding site. Cysteine 249 provides a ligand contact to Zn(2+). Catalysis depends on cysteine 249, which acts as the Nucleophile.

This sequence belongs to the DDAH family. Homodimer.

The enzyme catalyses N(omega),N(omega)-dimethyl-L-arginine + H2O = dimethylamine + L-citrulline. It carries out the reaction N(omega)-methyl-L-arginine + H2O = L-citrulline + methylamine. Inhibited by zinc ions. Competitively inhibited by lysine. Functionally, hydrolyzes N(G),N(G)-dimethyl-L-arginine (ADMA) and N(G)-monomethyl-L-arginine (MMA). The protein is N(G),N(G)-dimethylarginine dimethylaminohydrolase of Pseudomonas aeruginosa (strain ATCC 15692 / DSM 22644 / CIP 104116 / JCM 14847 / LMG 12228 / 1C / PRS 101 / PAO1).